A 168-amino-acid polypeptide reads, in one-letter code: Photosystem I assembly protein Ycf3 (168 aa).

TPR repeat units lie at residues 35 to 68, 72 to 105, and 120 to 153; these read AFTY…EIDP, SYIL…NPFL, and GEEA…TPGN.

This sequence belongs to the Ycf3 family.

Its subcellular location is the plastid. The protein resides in the chloroplast thylakoid membrane. In terms of biological role, essential for the assembly of the photosystem I (PSI) complex. May act as a chaperone-like factor to guide the assembly of the PSI subunits. In Nuphar advena (Common spatterdock), this protein is Photosystem I assembly protein Ycf3.